The primary structure comprises 171 residues: Protein-export protein SecB (171 aa).

This sequence belongs to the SecB family. As to quaternary structure, homotetramer, a dimer of dimers. One homotetramer interacts with 1 SecA dimer.

Its subcellular location is the cytoplasm. In terms of biological role, one of the proteins required for the normal export of preproteins out of the cell cytoplasm. It is a molecular chaperone that binds to a subset of precursor proteins, maintaining them in a translocation-competent state. It also specifically binds to its receptor SecA. The protein is Protein-export protein SecB of Granulibacter bethesdensis (strain ATCC BAA-1260 / CGDNIH1).